The sequence spans 468 residues: Probable multidrug resistance protein NorM (468 aa).

The next 11 membrane-spanning stretches (helical) occupy residues 57–79 (LAAGGLGANLFFVVVTLLQGVLT), 100–122 (IYWTGFALSLLLAVPAFALLSFA), 142–164 (YAAVLRFAAPGSLIGVGLMRSFL), 173–195 (LLWVSLAGVGVNAFLNYGLIHGA), 205–227 (GSATATTITIWLTAITLVALLHG), 248–270 (LFGIGWPVAITYGVESTLFLATG), 280–302 (SLAAHQIALNVASVAFMVPLAIG), 323–345 (HAGFVALGLGVAFMSLSGLVLIV), 360–382 (PANARTVVLATSLLGIAAVFQIV), 401–423 (VPMLAATLGYWGIGFPTGYWFAF), and 433–452 (WWGLAAGLASVAMLMTWRFH).

Belongs to the multi antimicrobial extrusion (MATE) (TC 2.A.66.1) family.

The protein localises to the cell inner membrane. Its function is as follows. Multidrug efflux pump. In Burkholderia mallei (strain ATCC 23344), this protein is Probable multidrug resistance protein NorM (norM).